A 582-amino-acid polypeptide reads, in one-letter code: ATP-dependent lipid A-core flippase (582 aa).

5 helical membrane-spanning segments follow: residues 15 to 35, 68 to 88, 140 to 160, 161 to 181, and 254 to 274; these read LWPIISPFKLGLVVSGIALVI, YVVVLVIFLRGISNFISSYCL, GALITIVREGAYIISLLAVML, YTSWQLSIVLFLIGPIIAVLI, and VQIIASFALAAVLYLATVPTI. Residues 27 to 310 form the ABC transmembrane type-1 domain; sequence VVSGIALVIN…LTNVNAQFQK (284 aa). The ABC transporter domain maps to 342 to 578; it reads LSFKNVTFTY…NGAYKQLHHI (237 aa). Residue 376–383 coordinates ATP; sequence GRSGSGKS.

This sequence belongs to the ABC transporter superfamily. Lipid exporter (TC 3.A.1.106) family. As to quaternary structure, homodimer.

The protein localises to the cell inner membrane. It catalyses the reaction ATP + H2O + lipid A-core oligosaccharideSide 1 = ADP + phosphate + lipid A-core oligosaccharideSide 2.. Its function is as follows. Involved in lipopolysaccharide (LPS) biosynthesis. Translocates lipid A-core from the inner to the outer leaflet of the inner membrane. Transmembrane domains (TMD) form a pore in the inner membrane and the ATP-binding domain (NBD) is responsible for energy generation. This Pasteurella multocida (strain Pm70) protein is ATP-dependent lipid A-core flippase.